Here is a 113-residue protein sequence, read N- to C-terminus: MQAKAVARTVRIAPRKVRLVVDLIRGKQVGEAIAILNHTPKTASPVVEKVLKSAIANAEHNYEMDINNLVVEKVFVDEGPTLKRFRPRAMGRASQINKRTSHITVVVSEKKEG.

It belongs to the universal ribosomal protein uL22 family. As to quaternary structure, part of the 50S ribosomal subunit.

Its function is as follows. This protein binds specifically to 23S rRNA; its binding is stimulated by other ribosomal proteins, e.g. L4, L17, and L20. It is important during the early stages of 50S assembly. It makes multiple contacts with different domains of the 23S rRNA in the assembled 50S subunit and ribosome. The globular domain of the protein is located near the polypeptide exit tunnel on the outside of the subunit, while an extended beta-hairpin is found that lines the wall of the exit tunnel in the center of the 70S ribosome. This chain is Large ribosomal subunit protein uL22, found in Bacillus cereus (strain ATCC 10987 / NRS 248).